The sequence spans 57 residues: Large ribosomal subunit protein bL32 (57 aa).

A compositionally biased stretch (basic residues) spans 1-20 (MAVPKKKTSKAKRDQRRATW). A disordered region spans residues 1–24 (MAVPKKKTSKAKRDQRRATWRRQA).

This sequence belongs to the bacterial ribosomal protein bL32 family.

This is Large ribosomal subunit protein bL32 from Gloeothece citriformis (strain PCC 7424) (Cyanothece sp. (strain PCC 7424)).